Reading from the N-terminus, the 363-residue chain is Ribosomal RNA small subunit methyltransferase H (363 aa).

Residues glycine 55–histidine 57, aspartate 75, aspartate 122, and glutamine 129 contribute to the S-adenosyl-L-methionine site.

This sequence belongs to the methyltransferase superfamily. RsmH family.

It is found in the cytoplasm. The catalysed reaction is cytidine(1402) in 16S rRNA + S-adenosyl-L-methionine = N(4)-methylcytidine(1402) in 16S rRNA + S-adenosyl-L-homocysteine + H(+). Functionally, specifically methylates the N4 position of cytidine in position 1402 (C1402) of 16S rRNA. This is Ribosomal RNA small subunit methyltransferase H from Bordetella petrii (strain ATCC BAA-461 / DSM 12804 / CCUG 43448).